Reading from the N-terminus, the 109-residue chain is MAIGLNVTEPEGTCSDEDCPFHGNLSVRGQVLEGEVASTDMEKTVVVEREYDVFVPKYDRYMKRRSRVPAHAPECFDISVGDTVSIAETRPLSKTKSHVVVEITDGGDA.

Belongs to the universal ribosomal protein uS17 family. As to quaternary structure, part of the 30S ribosomal subunit.

In terms of biological role, one of the primary rRNA binding proteins, it binds specifically to the 5'-end of 16S ribosomal RNA. The chain is Small ribosomal subunit protein uS17 from Halobacterium salinarum (strain ATCC 29341 / DSM 671 / R1).